The following is a 367-amino-acid chain: Glutamate 5-kinase (367 aa).

Lysine 9 provides a ligand contact to ATP. 3 residues coordinate substrate: serine 49, aspartate 136, and asparagine 148. Residues 168 to 169 (TD) and 210 to 216 (TGGMKSK) each bind ATP. Positions 276 to 350 (SGQIEIDAGA…GMQSQHIQAR (75 aa)) constitute a PUA domain.

This sequence belongs to the glutamate 5-kinase family.

It is found in the cytoplasm. The enzyme catalyses L-glutamate + ATP = L-glutamyl 5-phosphate + ADP. It functions in the pathway amino-acid biosynthesis; L-proline biosynthesis; L-glutamate 5-semialdehyde from L-glutamate: step 1/2. Its function is as follows. Catalyzes the transfer of a phosphate group to glutamate to form L-glutamate 5-phosphate. The sequence is that of Glutamate 5-kinase from Bacillus cereus (strain ATCC 10987 / NRS 248).